We begin with the raw amino-acid sequence, 92 residues long: C-C motif chemokine 4 (92 aa).

An N-terminal signal peptide occupies residues 1 to 23 (MKLCVTVLSLLVLVAAFCSPALS). 2 cysteine pairs are disulfide-bonded: C34-C58 and C35-C74.

It belongs to the intercrine beta (chemokine CC) family. Homodimer. Interacts with CCR5.

Its subcellular location is the secreted. Functionally, monokine with inflammatory and chemokinetic properties. This Sus scrofa (Pig) protein is C-C motif chemokine 4 (CCL4).